A 120-amino-acid polypeptide reads, in one-letter code: SPbeta prophage-derived DSR anti-defense 1 (120 aa).

This sequence belongs to the DSR anti-defense 1 family. In terms of assembly, interacts with Bacillus subtilis DSR2 (via C-terminus) in a 2:4 ratio; this interaction leads to the absence of activation of the NADase defense activity of DSR2.

Counteracts the defense-associated sirtuin 2 (DSR2) defense system of the host. Inhibits the NADase activity of host DSR2 by competing with the tail tube protein that normally activates DSR2. The protein is SPbeta prophage-derived DSR anti-defense 1 (yotI) of Bacillus subtilis (strain 168).